The primary structure comprises 89 residues: Mu-theraphotoxin-Phlo1a (89 aa).

Positions 1–22 (MKVSVLITLAVLGVMFVWTSAA) are cleaved as a signal peptide. A propeptide spanning residues 23–52 (EQEDHGSDRRDSPALLKNLLGEEVFQSEER) is cleaved from the precursor. 3 cysteine pairs are disulfide-bonded: Cys54/Cys68, Cys61/Cys73, and Cys67/Cys81. Ile87 bears the Isoleucine amide mark.

This sequence belongs to the neurotoxin 10 (Hwtx-1) family. 39 (Jztx-34) subfamily. As to expression, expressed by the venom gland.

Its subcellular location is the secreted. In terms of biological role, gating-modifier toxin that inhibits voltage-gated sodium channel Nav by shifting the threshold for channel activation to more positive potentials. This toxin moderately inhibits human Nav1.7/SCN9A (IC(50)=459 nM) and weakly inhibits hNav1.2/SCN2A and hNav1.5/SCN5A (&lt;20% inhibition at 1 uM peptide). Inhibition of Nav1.7 is voltage-dependent, with lower inhibition at more positive test pulses. This chain is Mu-theraphotoxin-Phlo1a, found in Phlogius sp. (Tarantula spider).